A 378-amino-acid chain; its full sequence is UDP-4-amino-4-deoxy-L-arabinose--oxoglutarate aminotransferase (378 aa).

Residue Lys182 is modified to N6-(pyridoxal phosphate)lysine.

This sequence belongs to the DegT/DnrJ/EryC1 family. ArnB subfamily. In terms of assembly, homodimer. The cofactor is pyridoxal 5'-phosphate.

The enzyme catalyses UDP-4-amino-4-deoxy-beta-L-arabinose + 2-oxoglutarate = UDP-beta-L-threo-pentopyranos-4-ulose + L-glutamate. The protein operates within nucleotide-sugar biosynthesis; UDP-4-deoxy-4-formamido-beta-L-arabinose biosynthesis; UDP-4-deoxy-4-formamido-beta-L-arabinose from UDP-alpha-D-glucuronate: step 2/3. It participates in bacterial outer membrane biogenesis; lipopolysaccharide biosynthesis. In terms of biological role, catalyzes the conversion of UDP-4-keto-arabinose (UDP-Ara4O) to UDP-4-amino-4-deoxy-L-arabinose (UDP-L-Ara4N). The modified arabinose is attached to lipid A and is required for resistance to polymyxin and cationic antimicrobial peptides. This chain is UDP-4-amino-4-deoxy-L-arabinose--oxoglutarate aminotransferase, found in Aeromonas hydrophila subsp. hydrophila (strain ATCC 7966 / DSM 30187 / BCRC 13018 / CCUG 14551 / JCM 1027 / KCTC 2358 / NCIMB 9240 / NCTC 8049).